Consider the following 272-residue polypeptide: NH(3)-dependent NAD(+) synthetase (272 aa).

Gly45–Ser52 contacts ATP. Asp51 contributes to the Mg(2+) binding site. Position 138 (Arg138) interacts with deamido-NAD(+). Thr158 provides a ligand contact to ATP. Glu163 serves as a coordination point for Mg(2+). 2 residues coordinate deamido-NAD(+): Lys171 and Asp178. Residues Lys187 and Thr209 each contribute to the ATP site. His258 to Lys259 lines the deamido-NAD(+) pocket.

This sequence belongs to the NAD synthetase family. As to quaternary structure, homodimer.

It carries out the reaction deamido-NAD(+) + NH4(+) + ATP = AMP + diphosphate + NAD(+) + H(+). It functions in the pathway cofactor biosynthesis; NAD(+) biosynthesis; NAD(+) from deamido-NAD(+) (ammonia route): step 1/1. Its function is as follows. Catalyzes the ATP-dependent amidation of deamido-NAD to form NAD. Uses ammonia as a nitrogen source. The polypeptide is NH(3)-dependent NAD(+) synthetase (Bacillus thuringiensis subsp. konkukian (strain 97-27)).